A 340-amino-acid chain; its full sequence is Major histocompatibility complex class I-related gene protein (340 aa).

Positions methionine 1 to serine 22 are cleaved as a signal peptide. Residues arginine 23–serine 109 form an alpha-1 region. An antigen-binding cleft region spans residues arginine 23–threonine 201. At arginine 23–methionine 302 the chain is on the extracellular side. Residues tyrosine 29 and arginine 31 each contribute to the 8-(9H-purin-6-yl)-2-oxa-8-azabicyclo[3.3.1]nona-3,6-diene-4,6-dicarbaldehyde site. Arginine 31, serine 46, and lysine 65 together coordinate 5-(2-oxoethylideneamino)-6-(D-ribitylamino)uracil. The 5-(2-oxopropylideneamino)-6-(D-ribitylamino)uracil site is built by arginine 31, serine 46, and lysine 65. Residues arginine 31, serine 46, and lysine 65 each contribute to the 7-hydroxy-6-methyl-8-(1-D-ribityl)lumazine site. Residues lysine 65 and histidine 80 each contribute to the 8-(9H-purin-6-yl)-2-oxa-8-azabicyclo[3.3.1]nona-3,6-diene-4,6-dicarbaldehyde site. Residue lysine 65 participates in 2-amino-4-oxopteridine-6-carbaldehyde binding. Residue lysine 65 coordinates pyridoxal. Asparagine 107 is a glycosylation site (N-linked (GlcNAc...) asparagine). An alpha-2 region spans residues glycine 110 to threonine 201. Arginine 116 contributes to the 8-(9H-purin-6-yl)-2-oxa-8-azabicyclo[3.3.1]nona-3,6-diene-4,6-dicarbaldehyde binding site. Arginine 116, tyrosine 174, and glutamine 175 together coordinate 5-(2-oxoethylideneamino)-6-(D-ribitylamino)uracil. Arginine 116, tyrosine 174, and glutamine 175 together coordinate 5-(2-oxopropylideneamino)-6-(D-ribitylamino)uracil. Residues arginine 116, tyrosine 174, and glutamine 175 each coordinate 7-hydroxy-6-methyl-8-(1-D-ribityl)lumazine. Cystine bridges form between cysteine 120/cysteine 183 and cysteine 222/cysteine 278. Residues glutamate 202–glutamine 293 are alpha-3. The Ig-like C1-type domain maps to proline 203 to histidine 282. A connecting peptide region spans residues glutamate 294–methionine 302. A helical transmembrane segment spans residues lysine 303–tryptophan 323. Residues arginine 324–aspartate 340 lie on the Cytoplasmic side of the membrane.

This sequence belongs to the MHC class I family. Heterotrimer that consists of MR1, B2M and metabolite antigen. Major classes of metabolite ligands presented by MR1 include riboflavin-related antigens, pyrimidines and ribityl lumazines, nucleobase adducts and folate derivatives. Forms reversible covalent Schiff base complexes with microbial pyrimidine-based metabolite, which serves as a molecular switch triggering complete folding, stable association with B2M and translocation of the ternary complex from endoplasmic reticulum to the plasma membrane. Alternatively, forms non-Schiff base complexes with ribityl lumazines. On antigen-presenting cells, the ternary complex interacts with TCR on MR1-restricted T cells. Interacts with TAPBP and TAPBPL chaperones in the endoplasmic reticulum. TAPBP associated or not with MHC class I peptide loading complex binds ligand-free MR1 or MR1-B2M complex, providing for stable MR1 pools ready for metabolite antigen processing. TAPBPL interacts with MR1 in a ligand-independent way; this interaction may stabilize MR1 pool and facilitate ligand loading and dissociation. Structurally, MR1-B2M heterodimer adopts a topology similar to classical MHC class I molecules, with alpha-1 and alpha-2 domains of MR1 forming the antigen-binding cleft composed of two alpha-helices resting on a floor of 7-stranded anti-parallel beta-pleated sheet. MR1-B2M heterodimer (via alpha-helices) interacts with TCR (via CDR domains). Post-translationally, N-glycosylated.

The protein resides in the cell membrane. Its subcellular location is the endoplasmic reticulum membrane. It is found in the golgi apparatus membrane. It localises to the early endosome membrane. The protein localises to the late endosome membrane. Antigen-presenting molecule specialized in displaying microbial pyrimidine-based metabolites to alpha-beta T cell receptors (TCR) on innate-type mucosal-associated invariant T (MAIT) cells. In complex with B2M preferentially presents riboflavin-derived metabolites to semi-invariant TCRs on MAIT cells, guiding immune surveillance of the microbial metabolome at mucosal epithelial barriers. Signature pyrimidine-based microbial antigens are generated via non-enzymatic condensation of metabolite intermediates of the riboflavin pathway with by-products arising from other metabolic pathways such as glycolysis. Typical potent antigenic metabolites are 5-(2-oxoethylideneamino)-6-D-ribitylaminouracil (5-OE-RU) and 5-(2-oxopropylideneamino)-6-D-ribitylaminouracil (5-OP-RU), products of condensation of 5-amino-6-D-ribityaminouracil (5-A-RU) with glyoxal or methylglyoxal by-products, respectively. May present microbial antigens to various MAIT cell subsets, providing for unique recognition of diverse microbes, including pathogens that do not synthesize riboflavin. Upon antigen recognition, elicits rapid innate-type MAIT cell activation to eliminate pathogenic microbes by directly killing infected cells. During T cell development, drives thymic selection and post-thymic terminal differentiation of MAIT cells in a process dependent on commensal microflora. Acts as an immune sensor of cancer cell metabolome. May present a tumor-specific or -associated metabolite essential for cancer cell survival to a pan-cancer TCR on a non-MAIT CD8-positive T cell clone, triggering T cell-mediated killing of a wide range of cancer cell types. May present tumor-enriched pyridoxal and pyridoxal 5'-phosphate antigens, enabling preferential recognition of cancer cells. Presents nucleobase carbonyl adducts generated during oxidative stress. Captures M3Ade, a nucleobase adduct composed of one adenine modified by a malondialdehyde trimer, for recognition by MR1-restricted T cell clones expressing a polyclonal TCR repertoire. In Pongo pygmaeus (Bornean orangutan), this protein is Major histocompatibility complex class I-related gene protein.